The sequence spans 2593 residues: Citrinin polyketide synthase (2593 aa).

An N-terminal acylcarrier protein transacylase domain (SAT) region spans residues 70–224; that stretch reads KLLENLNAWI…YVSVIVDQRR (155 aa). The active-site Nucleophile; for transacylase activity is the cysteine 139. The active-site Proton donor/acceptor; for transacylase activity is the histidine 258. The 416-residue stretch at 391-806 folds into the Ketosynthase family 3 (KS3) domain; that stretch reads DERIAVIGMA…GSNASMVVTQ (416 aa). Catalysis depends on for beta-ketoacyl synthase activity residues cysteine 555, histidine 690, and histidine 729. The malonyl-CoA:ACP transacylase (MAT) domain stretch occupies residues 906-1191; sequence PDPKPVILCF…VAIWLEAGSN (286 aa). The interval 1291–1424 is N-terminal hotdog fold; sequence PKGLTTFVGY…GTITFQAADS (134 aa). In terms of domain architecture, PKS/mFAS DH spans 1291 to 1603; that stretch reads PKGLTTFVGY…YQKVSISGIR (313 aa). The segment at 1322-1601 is product template (PT) domain; sequence LLSGHIMANA…ISYQKVSISG (280 aa). Histidine 1326 (proton acceptor; for dehydratase activity) is an active-site residue. A C-terminal hotdog fold region spans residues 1451 to 1603; it reads VADDILQGRN…YQKVSISGIR (153 aa). The active-site Proton donor; for dehydratase activity is aspartate 1508. Positions 1636–1662 are disordered; sequence VADSPLVDGSSTAVSGTPPTKKAPKAP. In terms of domain architecture, Carrier spans 1661–1738; it reads APSVDITGKM…SLVECMQRIL (78 aa). Residue serine 1689 is modified to O-(pantetheine 4'-phosphoryl)serine. Active-site for methyltransferase activity residues include tyrosine 1955, histidine 2067, and glutamate 2093. Residues 1960 to 2134 form a methyltransferase (CMeT) domain region; the sequence is INAVWIQQAE…ATHWKKILTS (175 aa). The segment at 2215–2459 is NADPH-binding (R) domain; it reads PAPTGHCVLV…KALPDFDGSL (245 aa).

Requires pantetheine 4'-phosphate as cofactor.

It participates in mycotoxin biosynthesis. Non-reducing polyketide synthase; part of the gene cluster that mediates the biosynthesis of the mycotoxin citrinin, a hepato-nephrotoxic compound to humans due to inhibition of respiration complex III. The pathway begins with the synthesis of a keto-aldehyde intermediate by the citrinin PKS (pksCT) from successive condensations of 4 malonyl-CoA units, presumably with a simple acetyl-CoA starter unit. Release of the keto-aldehyde intermediate is consistent with the presence of the C-terminal reductive release domain. Mp11 collaborates with pksCT by catalyzing the hydrolysis of ACP-bound acyl intermediates to free the ACP from stalled intermediates. Mpl2 then catalyzes the oxidation of the C-12 methyl of the ketone intermediate to an alcohol intermediate which is further oxidized by the oxidoreductase mpl7 to produce a bisaldehyde intermediate. The fourth catalytic step is catalyzed by the mpl4 aldehyde dehydrogenase. The final transformation is the reduction of C-3 by mpl6 to provide the chemically stable citrinin nucleus. The polypeptide is Citrinin polyketide synthase (Monascus purpureus (Red mold)).